The sequence spans 387 residues: Proline-rich protein 5 (387 aa).

Interaction with RICTOR stretches follow at residues 10–96 (MSSP…LTKG) and 189–219 (HESRGVTEDYLRLETLIQKVVSPYLGTYGLY). The segment at 13–34 (PSLSDLGKREPGAAGTDERGTQ) is disordered. Residues 18-33 (LGKREPGAAGTDERGT) are compositionally biased toward basic and acidic residues. Serine 253 is subject to Phosphoserine. Residues 262 to 387 (NPVAEHEAEG…EAPGGRPSVV (126 aa)) form a disordered region. Positions 305-314 (SGTFRSSPTP) are enriched in polar residues. A Phosphoserine modification is found at serine 373.

This sequence belongs to the PROTOR family. Associated component of the mechanistic target of rapamycin complex 2 (mTORC2). Binds directly to MTOR and RICTOR within the TORC2 complex. As to expression, ubiquitously expressed. Expressed at high levels in kidney.

Associated subunit of mTORC2, which regulates cell growth and survival in response to hormonal signals. mTORC2 is activated by growth factors, but, in contrast to mTORC1, seems to be nutrient-insensitive. mTORC2 seems to function upstream of Rho GTPases to regulate the actin cytoskeleton, probably by activating one or more Rho-type guanine nucleotide exchange factors. PRR5 plays an important role in regulation of PDGFRB expression and in modulation of platelet-derived growth factor signaling. May act as a tumor suppressor in breast cancer. The polypeptide is Proline-rich protein 5 (Mus musculus (Mouse)).